A 376-amino-acid polypeptide reads, in one-letter code: tRNA-specific 2-thiouridylase MnmA (376 aa).

ATP-binding positions include 17-24 (GMSGGVDS) and Met43. Positions 103-105 (NPD) are interaction with target base in tRNA. Cys108 (nucleophile) is an active-site residue. Cys108 and Cys204 form a disulfide bridge. Gly132 lines the ATP pocket. The interaction with tRNA stretch occupies residues 154–156 (KDQ). Cys204 functions as the Cysteine persulfide intermediate in the catalytic mechanism. The segment at 316 to 317 (RY) is interaction with tRNA.

Belongs to the MnmA/TRMU family.

The protein resides in the cytoplasm. It carries out the reaction S-sulfanyl-L-cysteinyl-[protein] + uridine(34) in tRNA + AH2 + ATP = 2-thiouridine(34) in tRNA + L-cysteinyl-[protein] + A + AMP + diphosphate + H(+). Catalyzes the 2-thiolation of uridine at the wobble position (U34) of tRNA, leading to the formation of s(2)U34. This is tRNA-specific 2-thiouridylase MnmA from Pseudomonas syringae pv. syringae (strain B728a).